Reading from the N-terminus, the 155-residue chain is Protein LOL2 (155 aa).

The residue at position 1 (M1) is an N-acetylmethionine. The tract at residues 1–35 is disordered; that stretch reads MEEIQQQTQKEEQKHREEEEEEEEGPPPGWESAVL. 2 putative zinc finger regions span residues 60-90 and 98-128; these read QMVC…VNLV and QVNC…VTDI. The interval 130–155 is disordered; it reads ENNKRPPWSEQQGPLKSLSSLRRAEN. Polar residues predominate over residues 138–149; it reads SEQQGPLKSLSS.

The protein localises to the nucleus. Its function is as follows. Putative zinc finger that may be involved in programmed cell death and defense response. This chain is Protein LOL2 (LOL2), found in Arabidopsis thaliana (Mouse-ear cress).